Consider the following 730-residue polypeptide: LisH domain-containing protein ARMC9 (730 aa).

The region spanning 7-39 (HESELLGLVKEYLDFAEFEDTLKTFSKECKVKG) is the LisH domain. Residues 205 to 242 (SNNKEMLQQLHQQLLEAERRAMAYLKRYNKMQADYHSL) are a coiled coil. Residue Ser-583 is modified to Phosphoserine. A disordered region spans residues 675–730 (QNAQQARNGCPRPIPVAQPDDYKEGKRGVAGRATPSSCKSAECAEPVLSSGAQKPK).

In terms of assembly, interacts with TOGARAM1, CCDC66, CEP104, CSPP1 and CEP290. Interacts with NDUFAF2.

The protein resides in the cytoplasm. Its subcellular location is the cytoskeleton. The protein localises to the cilium basal body. It is found in the cell projection. It localises to the cilium. The protein resides in the microtubule organizing center. Its subcellular location is the centrosome. The protein localises to the centriole. Functionally, involved in ciliogenesis. It is required for appropriate acetylation and polyglutamylation of ciliary microtubules, and regulation of cilium length. Acts as a positive regulator of hedgehog (Hh)signaling. May participate in the trafficking and/or retention of GLI2 and GLI3 proteins at the ciliary tip. The polypeptide is LisH domain-containing protein ARMC9 (Armc9) (Rattus norvegicus (Rat)).